Reading from the N-terminus, the 189-residue chain is Hypoxanthine/guanine phosphoribosyltransferase (189 aa).

It belongs to the purine/pyrimidine phosphoribosyltransferase family. Archaeal HPRT subfamily. Homodimer.

The protein localises to the cytoplasm. The enzyme catalyses IMP + diphosphate = hypoxanthine + 5-phospho-alpha-D-ribose 1-diphosphate. It carries out the reaction GMP + diphosphate = guanine + 5-phospho-alpha-D-ribose 1-diphosphate. It functions in the pathway purine metabolism; IMP biosynthesis via salvage pathway; IMP from hypoxanthine: step 1/1. In terms of biological role, catalyzes a salvage reaction resulting in the formation of IMP that is energically less costly than de novo synthesis. The polypeptide is Hypoxanthine/guanine phosphoribosyltransferase (Methanosarcina mazei (strain ATCC BAA-159 / DSM 3647 / Goe1 / Go1 / JCM 11833 / OCM 88) (Methanosarcina frisia)).